The sequence spans 81 residues: Omega-conotoxin-like TxMKLT1-0223 (81 aa).

The N-terminal stretch at 1–22 is a signal peptide; that stretch reads MKLTCMMIVAVLFLTAWTFVTA. Positions 23–52 are excised as a propeptide; that stretch reads VPHSSNALENLYLKARHEMENPEASKLNTR. Cystine bridges form between cysteine 55-cysteine 72, cysteine 62-cysteine 76, and cysteine 71-cysteine 80.

The protein belongs to the conotoxin O1 superfamily. As to expression, expressed by the venom duct.

The protein resides in the secreted. Functionally, omega-conotoxins act at presynaptic membranes, they bind and block voltage-gated calcium channels (Cav). This is Omega-conotoxin-like TxMKLT1-0223 from Conus textile (Cloth-of-gold cone).